The sequence spans 1004 residues: Putative helicase MOV-10 (1004 aa).

Residue Lys148 is modified to N6-acetyllysine. Thr254 carries the phosphothreonine modification. A Phosphoserine modification is found at Ser433. 525–532 serves as a coordination point for ATP; the sequence is GPPGTGKT. The short motif at 646–649 is the DEAG box element; sequence DEAG. The segment at 922-966 is interaction with AGO2 and APOBEC3G; that stretch reads NPLLLGHDPDWKTFLEFCKENGGYTGCPFPAKLDLQQGQDLLQGL. Residues 966–1004 form a disordered region; that stretch reads LSKLSPSTSGPRRHQNLPQEREGEGGLPLQVEPEWRNEL. Phosphoserine is present on Ser970.

It belongs to the DNA2/NAM7 helicase family. SDE3 subfamily. As to quaternary structure, interacts with DICER1, AGO2, TARBP2, EIF6 and RPL7A (60S ribosome subunit); they form a large RNA-induced silencing complex (RISC). Interacts with APOBEC3G in an RNA-dependent manner. Interacts with TRIM71 (via NHL repeats) in an RNA-dependent manner. Interacts with both protein products of LIRE1, ORF1p and ORF2p. Interacts with TUT4 and, to a lesser extent, TUT7; the interactions are RNA-dependent. Interacts with AGO2, TNRC6B and UPF1; the interactions are direct and RNA-dependent. Interacts with FMR1; this interaction is direct, occurs in an RNA-dependent manner on polysomes and induces association of MOV10 with RNAs. Interacts with SHFL; the interaction increases in presence of RNA. Interacts with DHX34; the interaction is RNA-independent. Interacts with RBM46. Ubiquitinated by the DCX(DCAF12) complex that specifically recognizes the glutamate-leucine (Glu-Leu) degron at the C-terminus, leading to its degradation.

It localises to the cytoplasm. It is found in the P-body. The protein localises to the nucleus. Its subcellular location is the cytoplasmic ribonucleoprotein granule. The protein resides in the stress granule. It catalyses the reaction ATP + H2O = ADP + phosphate + H(+). 5' to 3' RNA helicase that is involved in a number of cellular roles ranging from mRNA metabolism and translation, modulation of viral infectivity, inhibition of retrotransposition, or regulation of synaptic transmission. Plays an important role in innate antiviral immunity by promoting type I interferon production. Mechanistically, specifically uses IKKepsilon/IKBKE as the mediator kinase for IRF3 activation. Contributes to UPF1 mRNA target degradation by translocation along 3' UTRs. Required for microRNA (miRNA)-mediated gene silencing by the RNA-induced silencing complex (RISC). Required for both miRNA-mediated translational repression and miRNA-mediated cleavage of complementary mRNAs by RISC. In cooperation with FMR1, regulates miRNA-mediated translational repression by AGO2. Restricts retrotransposition of long interspersed element-1 (LINE-1) in cooperation with TUT4 and TUT7 counteracting the RNA chaperonne activity of L1RE1. Facilitates LINE-1 uridylation by TUT4 and TUT7. Required for embryonic viability and for normal central nervous system development and function. Plays two critical roles in early brain development: suppresses retroelements in the nucleus by directly inhibiting cDNA synthesis, while regulates cytoskeletal mRNAs to influence neurite outgrowth in the cytosol. May function as a messenger ribonucleoprotein (mRNP) clearance factor. This is Putative helicase MOV-10 (Mov10) from Mus musculus (Mouse).